The sequence spans 75 residues: UPF0512 protein D (75 aa).

Positions 1–20 (MAIFKSISSISNSTGSMGSS) are disordered.

Belongs to the UPF0512 family.

The protein is UPF0512 protein D of Dictyostelium discoideum (Social amoeba).